The following is a 607-amino-acid chain: DNA polymerase (607 aa).

The region spanning 1–213 (MIELRHEVQG…CSALAPLVPD (213 aa)) is the 3'-5' exonuclease domain. Residues 214-607 (VSRPLVPYEH…SWGSLYGADY (394 aa)) are polymerase.

This sequence belongs to the DNA polymerase type-A family.

The catalysed reaction is DNA(n) + a 2'-deoxyribonucleoside 5'-triphosphate = DNA(n+1) + diphosphate. In terms of biological role, replicates viral genomic DNA. This polymerase possesses two enzymatic activities: DNA synthesis (polymerase) and an exonucleolytic activity that degrades single-stranded DNA in the 3'-5' direction. The chain is DNA polymerase (44) from Mycobacterium phage D29 (Mycobacteriophage D29).